Here is a 193-residue protein sequence, read N- to C-terminus: Cysteine and glycine-rich protein 1 (193 aa).

Residues 10 to 61 (CGVCQKTVYFAEEVQCEGNSFHKSCFLCMVCKKNLDSTTVAVHGEEIYCKSC) form the LIM zinc-binding 1 domain. Residues 64 to 69 (KKYGPK) carry the Nuclear localization signal motif. S81 carries the post-translational modification Phosphoserine. K84 bears the N6-acetyllysine mark. K91 is covalently cross-linked (Glycyl lysine isopeptide (Lys-Gly) (interchain with G-Cter in SUMO2)). Residues K112, K131, K137, and K161 each carry the N6-acetyllysine modification. In terms of domain architecture, LIM zinc-binding 2 spans 119–170 (CPRCSQAVYAAEKVIGAGKSWHKACFRCAKCGKGLESTTLADKDGEIYCKGC). S192 bears the Phosphoserine mark.

In terms of assembly, interacts with ASCC1; ASCC2 and TRIP4.

The protein localises to the nucleus. Its function is as follows. Could play a role in neuronal development. This chain is Cysteine and glycine-rich protein 1 (CSRP1), found in Pongo abelii (Sumatran orangutan).